We begin with the raw amino-acid sequence, 206 residues long: Two-component response regulator ORR7 (206 aa).

The segment at 53–92 is disordered; the sequence is VVPLHDNASAEDDDDDEEDDDEDDDDDDDEDDEEEAAPPY. Positions 61 to 88 are enriched in acidic residues; the sequence is SAEDDDDDEEDDDEDDDDDDDEDDEEEA. The region spanning 92-205 is the Response regulatory domain; sequence YVMAVDDSSV…DISRITSRML (114 aa). Aspartate 138 carries the post-translational modification 4-aspartylphosphate.

This sequence belongs to the ARR family. Type-A subfamily. Post-translationally, two-component system major event consists of a His-to-Asp phosphorelay between a sensor histidine kinase (HK) and a response regulator (RR). In plants, the His-to-Asp phosphorelay involves an additional intermediate named Histidine-containing phosphotransfer protein (HPt). This multistep phosphorelay consists of a His-Asp-His-Asp sequential transfer of a phosphate group between first a His and an Asp of the HK protein, followed by the transfer to a conserved His of the HPt protein and finally the transfer to an Asp in the receiver domain of the RR protein. Expressed in flowers, and at low levels in roots, mature leaves and shoots.

Functionally, functions as a response regulator involved in His-to-Asp phosphorelay signal transduction system. Phosphorylation of the Asp residue in the receiver domain activates the ability of the protein to promote the transcription of target genes. Type-A response regulators seem to act as negative regulators of the cytokinin signaling. The chain is Two-component response regulator ORR7 from Oryza sativa subsp. indica (Rice).